The primary structure comprises 140 residues: TPT1-like protein (140 aa).

Positions 6–140 (MITYWDLISH…LANFKNYQKT (135 aa)) constitute a TCTP domain.

Belongs to the TCTP family.

The chain is TPT1-like protein from Homo sapiens (Human).